The following is a 249-amino-acid chain: MATLRVQPEAQAKVDVFREDLCTKTENLLGSYFPKKISELDAFLKEPALNEANLSNLKAPLDIPVPDPVKEKEKGERKKQQEKEDKDEKKKGEDEDKGPPCGPVNCNEKILVLLQRLKPEIKDVIEQLNLVTTWLQLQIPRIEDGNNFGVAVQEKVFELMTSLHTKLEGFHTQISKYFSERGDAVTKAAKQPHVGDYRQLVHELDEAEYRDIRLMVMEIRNAYAVLYDIILKNFEKLKKPRGETKGMIY.

Residues 60–101 form a disordered region; that stretch reads PLDIPVPDPVKEKEKGERKKQQEKEDKDEKKKGEDEDKGPPC. Basic and acidic residues predominate over residues 68 to 98; the sequence is PVKEKEKGERKKQQEKEDKDEKKKGEDEDKG.

Belongs to the PA28 family. Heterodimer of PSME1 and PSME2, which forms a hexameric ring. PSME1 can form homoheptamers.

Functionally, implicated in immunoproteasome assembly and required for efficient antigen processing. The PA28 activator complex enhances the generation of class I binding peptides by altering the cleavage pattern of the proteasome. The sequence is that of Proteasome activator complex subunit 1 (PSME1) from Macaca fascicularis (Crab-eating macaque).